Here is a 236-residue protein sequence, read N- to C-terminus: Uridylate kinase (236 aa).

Residue 10–11 (GS) participates in ATP binding. Gly-44 contributes to the UMP binding site. 2 residues coordinate ATP: Gly-45 and Arg-49. UMP-binding positions include Asp-66 and 114–120 (ITPGQTT). Residues Thr-140, Tyr-146, and Asp-149 each contribute to the ATP site.

Belongs to the UMP kinase family. As to quaternary structure, homohexamer.

The protein localises to the cytoplasm. It carries out the reaction UMP + ATP = UDP + ADP. It functions in the pathway pyrimidine metabolism; CTP biosynthesis via de novo pathway; UDP from UMP (UMPK route): step 1/1. Inhibited by UTP. Functionally, catalyzes the reversible phosphorylation of UMP to UDP. The sequence is that of Uridylate kinase from Methanospirillum hungatei JF-1 (strain ATCC 27890 / DSM 864 / NBRC 100397 / JF-1).